The primary structure comprises 475 residues: Phosphoglucosamine mutase (475 aa).

Ser-126 acts as the Phosphoserine intermediate in catalysis. Mg(2+) is bound by residues Ser-126, Asp-265, Asp-267, and Asp-269. Ser-126 carries the phosphoserine modification.

It belongs to the phosphohexose mutase family. Mg(2+) serves as cofactor. Post-translationally, activated by phosphorylation.

It catalyses the reaction alpha-D-glucosamine 1-phosphate = D-glucosamine 6-phosphate. Catalyzes the conversion of glucosamine-6-phosphate to glucosamine-1-phosphate. This chain is Phosphoglucosamine mutase, found in Synechococcus sp. (strain ATCC 27144 / PCC 6301 / SAUG 1402/1) (Anacystis nidulans).